We begin with the raw amino-acid sequence, 108 residues long: Gibberellin-regulated protein 7 (108 aa).

A signal peptide spans M1 to A23.

The protein belongs to the GASA family. In terms of processing, six disulfide bonds may be present.

Its subcellular location is the secreted. Its function is as follows. Gibberellin-regulated protein that may function in hormonal controlled steps of development such as seed germination, flowering and seed maturation. The sequence is that of Gibberellin-regulated protein 7 (GASA7) from Arabidopsis thaliana (Mouse-ear cress).